The chain runs to 279 residues: Shikimate dehydrogenase (NADP(+)) (279 aa).

Residues 21–23 (SMS) and T68 each bind shikimate. Residue K72 is the Proton acceptor of the active site. Positions 93 and 108 each coordinate shikimate. NADP(+)-binding positions include 130–134 (GAGGA) and L219. Y221 serves as a coordination point for shikimate. Residue G242 coordinates NADP(+).

The protein belongs to the shikimate dehydrogenase family. Homodimer.

It carries out the reaction shikimate + NADP(+) = 3-dehydroshikimate + NADPH + H(+). The protein operates within metabolic intermediate biosynthesis; chorismate biosynthesis; chorismate from D-erythrose 4-phosphate and phosphoenolpyruvate: step 4/7. In terms of biological role, involved in the biosynthesis of the chorismate, which leads to the biosynthesis of aromatic amino acids. Catalyzes the reversible NADPH linked reduction of 3-dehydroshikimate (DHSA) to yield shikimate (SA). The polypeptide is Shikimate dehydrogenase (NADP(+)) (Oleidesulfovibrio alaskensis (strain ATCC BAA-1058 / DSM 17464 / G20) (Desulfovibrio alaskensis)).